The primary structure comprises 181 residues: Probable mitochondrial import inner membrane translocase subunit tim-17B.1 (181 aa).

A run of 3 helical transmembrane segments spans residues 17-37, 61-81, and 109-129; these read IGSA…FGGY, GVQF…LVAI, and VMAG…GVGL. Positions 137-181 are disordered; that stretch reads AMMDPTQPPPEALDDPRSLGQKSQAEPGLDQTRPFGIPTGLPNLS.

This sequence belongs to the Tim17/Tim22/Tim23 family.

The protein resides in the mitochondrion inner membrane. Its function is as follows. Essential component of the TIM23 complex, a complex that mediates the translocation of transit peptide-containing proteins across the mitochondrial inner membrane. This chain is Probable mitochondrial import inner membrane translocase subunit tim-17B.1, found in Caenorhabditis elegans.